Reading from the N-terminus, the 524-residue chain is AAA ATPase forming ring-shaped complexes (524 aa).

The interval M1 to L29 is disordered. The stretch at A22–A59 forms a coiled coil. G250–L255 lines the ATP pocket.

The protein belongs to the AAA ATPase family. Homohexamer. Assembles into a hexameric ring structure.

The polypeptide is AAA ATPase forming ring-shaped complexes (Bifidobacterium animalis subsp. lactis (strain BB-12)).